The following is a 465-amino-acid chain: MSLSLWQQCLARLHDELPATEFSMWIRPLQAELSDNTLALYAPNRFVLDWVRDKYLNNINVLLNDFCGMDAPLLRFEVGSKPLVQAISQPAQPHHKQVSAAPQQQVRSAPVRPSWDNSPAQAEHTYRSNVNPKHTFDNFVEGKSNQLARAAARQVADNPGGAYNPLFLYGGTGLGKTHLLHAVGNGIIARKPNAKVVYMHSERFVQDMVKALQNNAIEEFKRYYRSVDALLIDDIQFFANKERSQEEFFHTFNALLEGNQQIILTSDRYPKEINGVEDRLKSRFGWGLTVAIEPPELETRVAILMKKADENDIRLPGEVAFFIAKRLRSNVRELEGALNRVIANANFTGRSITIDFVREALRDLLALQEKLVTIDNIQKTVAEYYKIKVADLLSKRRSRSVARPRQMAMALAKELTNHSLPEIGDAFGGRDHTTVLHACRKIEQLREESHDIKEDFSNLIRTLSS.

Residues 1–84 (MSLSLWQQCL…RFEVGSKPLV (84 aa)) are domain I, interacts with DnaA modulators. The segment at 84-128 (VQAISQPAQPHHKQVSAAPQQQVRSAPVRPSWDNSPAQAEHTYRS) is domain II. A disordered region spans residues 91 to 120 (AQPHHKQVSAAPQQQVRSAPVRPSWDNSPA). The tract at residues 129-345 (NVNPKHTFDN…GALNRVIANA (217 aa)) is domain III, AAA+ region. Residues Gly-173, Gly-175, Lys-176, and Thr-177 each coordinate ATP. A domain IV, binds dsDNA region spans residues 346–465 (NFTGRSITID…FSNLIRTLSS (120 aa)).

The protein belongs to the DnaA family. As to quaternary structure, oligomerizes as a right-handed, spiral filament on DNA at oriC.

Its subcellular location is the cytoplasm. In terms of biological role, plays an essential role in the initiation and regulation of chromosomal replication. ATP-DnaA binds to the origin of replication (oriC) to initiate formation of the DNA replication initiation complex once per cell cycle. Binds the DnaA box (a 9 base pair repeat at the origin) and separates the double-stranded (ds)DNA. Forms a right-handed helical filament on oriC DNA; dsDNA binds to the exterior of the filament while single-stranded (ss)DNA is stabiized in the filament's interior. The ATP-DnaA-oriC complex binds and stabilizes one strand of the AT-rich DNA unwinding element (DUE), permitting loading of DNA polymerase. After initiation quickly degrades to an ADP-DnaA complex that is not apt for DNA replication. Binds acidic phospholipids. In Pectobacterium carotovorum subsp. carotovorum (strain PC1), this protein is Chromosomal replication initiator protein DnaA.